The primary structure comprises 348 residues: Ubiquitin thioesterase OTU1 (348 aa).

Residues 1–11 (MFGPAKGRHFG) show a composition bias toward basic residues. The tract at residues 1–39 (MFGPAKGRHFGVHPAPGFPGGVSQQAAGTKAGPAGAWPV) is disordered. The interval 50–128 (RCKAKDGTHV…IIEEDQTRPR (79 aa)) is UBX-like. The region spanning 149–274 (LTRTVVPADN…GIHYDPLQRN (126 aa)) is the OTU domain. Residues 154–160 (VPADNSC) form a cys-loop region. Asp-157 is a catalytic residue. Cys-160 (nucleophile) is an active-site residue. Residues 213–223 (IKRDDTWGGAI) are variable-loop. A his-loop region spans residues 263-267 (YDGIH). Ile-266 is a substrate binding site. Residue His-267 is part of the active site. The S2 site stretch occupies residues 291–296 (DIVLVQ). The C2H2-type zinc finger occupies 318-342 (LRCMVCQKGLTGQAEAREHAKETGH). His-342 is a catalytic residue.

In terms of assembly, interacts with VCP; the interaction is direct. Interacts with FAF2/UBXD8. Interacts with DERL1; however interaction is dependent on the UBAX-like region, suggesting that it may be indirect. Interacts with PLAA, UBXN6 and VCP; may form a complex involved in macroautophagy.

The protein localises to the cytoplasm. It carries out the reaction Thiol-dependent hydrolysis of ester, thioester, amide, peptide and isopeptide bonds formed by the C-terminal Gly of ubiquitin (a 76-residue protein attached to proteins as an intracellular targeting signal).. In terms of biological role, hydrolase that can remove conjugated ubiquitin from proteins and participates in endoplasmic reticulum-associated degradation (ERAD) for misfolded lumenal proteins. May act by triming the ubiquitin chain on the associated substrate to facilitate their threading through the VCP/p97 pore. Ubiquitin moieties on substrates may present a steric impediment to the threading process when the substrate is transferred to the VCP pore and threaded through VCP's axial channel. Mediates deubiquitination of 'Lys-27'-, 'Lys-29'- and 'Lys-33'-linked polyubiquitin chains. Also able to hydrolyze 'Lys-11'-linked ubiquitin chains. Cleaves both polyubiquitin and di-ubiquitin. May play a role in macroautophagy, regulating for instance the clearance of damaged lysosomes. May recruit PLAA, UBXN6 and VCP to damaged lysosome membranes decorated with K48-linked ubiquitin chains and remove these chains allowing autophagosome formation. This is Ubiquitin thioesterase OTU1 (YOD1) from Homo sapiens (Human).